Here is a 165-residue protein sequence, read N- to C-terminus: Large ribosomal subunit protein uL10 (165 aa).

This sequence belongs to the universal ribosomal protein uL10 family. In terms of assembly, part of the ribosomal stalk of the 50S ribosomal subunit. The N-terminus interacts with L11 and the large rRNA to form the base of the stalk. The C-terminus forms an elongated spine to which L12 dimers bind in a sequential fashion forming a multimeric L10(L12)X complex.

Forms part of the ribosomal stalk, playing a central role in the interaction of the ribosome with GTP-bound translation factors. The sequence is that of Large ribosomal subunit protein uL10 from Citrobacter koseri (strain ATCC BAA-895 / CDC 4225-83 / SGSC4696).